The chain runs to 699 residues: tRNA 5-methylaminomethyl-2-thiouridine biosynthesis bifunctional protein MnmC (699 aa).

The interval 1-260 (MTAKPQKSCQ…ERKLLRQQAD (260 aa)) is tRNA (mnm(5)s(2)U34)-methyltransferase. An FAD-dependent cmnm(5)s(2)U34 oxidoreductase region spans residues 282-699 (VGGGLASANL…LRKLLKGKAL (418 aa)).

In the N-terminal section; belongs to the methyltransferase superfamily. tRNA (mnm(5)s(2)U34)-methyltransferase family. It in the C-terminal section; belongs to the DAO family. It depends on FAD as a cofactor.

The protein resides in the cytoplasm. It carries out the reaction 5-aminomethyl-2-thiouridine(34) in tRNA + S-adenosyl-L-methionine = 5-methylaminomethyl-2-thiouridine(34) in tRNA + S-adenosyl-L-homocysteine + H(+). In terms of biological role, catalyzes the last two steps in the biosynthesis of 5-methylaminomethyl-2-thiouridine (mnm(5)s(2)U) at the wobble position (U34) in tRNA. Catalyzes the FAD-dependent demodification of cmnm(5)s(2)U34 to nm(5)s(2)U34, followed by the transfer of a methyl group from S-adenosyl-L-methionine to nm(5)s(2)U34, to form mnm(5)s(2)U34. The polypeptide is tRNA 5-methylaminomethyl-2-thiouridine biosynthesis bifunctional protein MnmC (Shewanella sp. (strain MR-4)).